The sequence spans 263 residues: Carbon monoxide dehydrogenase accessory protein CooC (263 aa).

7–14 (GKGGVGKS) provides a ligand contact to ATP.

In terms of biological role, involved in the insertion of nickel into the carbon monoxide dehydrogenase (CODH). The polypeptide is Carbon monoxide dehydrogenase accessory protein CooC (cooC) (Rhodospirillum rubrum).